The chain runs to 334 residues: Small ribosomal subunit protein uS2 (334 aa).

Belongs to the universal ribosomal protein uS2 family.

This is Small ribosomal subunit protein uS2 from Rhodopseudomonas palustris (strain BisB18).